A 163-amino-acid polypeptide reads, in one-letter code: NADH-quinone oxidoreductase subunit I (163 aa).

4Fe-4S ferredoxin-type domains follow at residues 55 to 84 (RRYP…IDAE) and 94 to 123 (TRYD…EGPN). The [4Fe-4S] cluster site is built by cysteine 64, cysteine 67, cysteine 70, cysteine 74, cysteine 103, cysteine 106, cysteine 109, and cysteine 113.

It belongs to the complex I 23 kDa subunit family. NDH-1 is composed of 14 different subunits. Subunits NuoA, H, J, K, L, M, N constitute the membrane sector of the complex. It depends on [4Fe-4S] cluster as a cofactor.

The protein resides in the cell inner membrane. The enzyme catalyses a quinone + NADH + 5 H(+)(in) = a quinol + NAD(+) + 4 H(+)(out). NDH-1 shuttles electrons from NADH, via FMN and iron-sulfur (Fe-S) centers, to quinones in the respiratory chain. The immediate electron acceptor for the enzyme in this species is believed to be ubiquinone. Couples the redox reaction to proton translocation (for every two electrons transferred, four hydrogen ions are translocated across the cytoplasmic membrane), and thus conserves the redox energy in a proton gradient. The chain is NADH-quinone oxidoreductase subunit I (nuoI) from Rhodobacter capsulatus (Rhodopseudomonas capsulata).